The sequence spans 701 residues: Polyribonucleotide nucleotidyltransferase (701 aa).

Residues Asp483 and Asp489 each coordinate Mg(2+). The KH domain occupies 550-609; the sequence is PRIYTLHIPTDKIRDVIGPGGKVIRGIIEQTGVKIDVEDDGTIHVASADEASANKAIQII. The S1 motif domain occupies 619–686; sequence GKTYLGKVVR…EGNKIKLSRK (68 aa).

The protein belongs to the polyribonucleotide nucleotidyltransferase family. Mg(2+) serves as cofactor.

Its subcellular location is the cytoplasm. The enzyme catalyses RNA(n+1) + phosphate = RNA(n) + a ribonucleoside 5'-diphosphate. Functionally, involved in mRNA degradation. Catalyzes the phosphorolysis of single-stranded polyribonucleotides processively in the 3'- to 5'-direction. The sequence is that of Polyribonucleotide nucleotidyltransferase from Solibacter usitatus (strain Ellin6076).